We begin with the raw amino-acid sequence, 137 residues long: Small ribosomal subunit protein uS9 (137 aa).

The segment at 114-137 (DSRMKERKKPGLRGARRGVQFSKR) is disordered. Positions 118–137 (KERKKPGLRGARRGVQFSKR) are enriched in basic residues.

It belongs to the universal ribosomal protein uS9 family.

The protein is Small ribosomal subunit protein uS9 of Rhodopirellula baltica (strain DSM 10527 / NCIMB 13988 / SH1).